The chain runs to 847 residues: B-cell receptor CD22 (847 aa).

The first 19 residues, 1–19 (MHLLGPWLLLLVLEYLAFC), serve as a signal peptide directing secretion. The region spanning 20–138 (DSSKWAFEHP…MERIHLNVSE (119 aa)) is the Ig-like V-type domain. At 20 to 687 (DSSKWAFEHP…YYSPETIGRR (668 aa)) the chain is on the extracellular side. N-linked (GlcNAc...) asparagine glycans are attached at residues Asn-67, Asn-101, and Asn-112. Residue Arg-120 participates in N-acetylneuraminate binding. N-linked (GlcNAc...) asparagine glycosylation is found at Asn-135, Asn-164, Asn-231, Asn-295, Asn-363, Asn-428, Asn-445, Asn-448, and Asn-479. 6 Ig-like C2-type domains span residues 143 to 235 (PHIQ…DTVQ), 242 to 324 (PKLE…AEVF), 331 to 416 (PEPS…LDVQ), 419 to 500 (PKKV…VALN), 505 to 582 (PRDV…QTAS), and 593 to 676 (PRRL…STLN). Residues Cys-161 and Cys-219 are joined by a disulfide bond. 2 disulfide bridges follow: Cys-265–Cys-309 and Cys-353–Cys-396. 2 cysteine pairs are disulfide-bonded: Cys-442–Cys-484 and Cys-529–Cys-571. N-linked (GlcNAc...) asparagine glycosylation is found at Asn-574 and Asn-634. Cysteines 616 and 659 form a disulfide. Residues 688–708 (VAVGLGSCLAILILAICGLKL) traverse the membrane as a helical segment. At 709–847 (QRRWKRTQSQ…ENVDYVILKH (139 aa)) the chain is on the cytoplasmic side. Residues Ser-725, Ser-726, and Ser-729 each carry the phosphoserine modification. 2 short sequence motifs (ITIM motif) span residues 760 to 765 (ISYTTL) and 794 to 799 (VTYSVL). A Phosphotyrosine modification is found at Tyr-762. Tyr-807, Tyr-822, and Tyr-842 each carry phosphotyrosine. 2 consecutive short sequence motifs (ITIM motif) follow at residues 820–825 (IHYSEL) and 840–845 (VDYVIL).

It belongs to the immunoglobulin superfamily. SIGLEC (sialic acid binding Ig-like lectin) family. Predominantly monomer of isoform CD22-beta. Also found as heterodimer of isoform CD22-beta and a shorter isoform. Interacts with PTPN6/SHP-1, LYN, SYK, PIK3R1/PIK3R2 and PLCG1 upon phosphorylation. Interacts with GRB2, INPP5D and SHC1 upon phosphorylation. May form a complex with INPP5D/SHIP, GRB2 and SHC1. Post-translationally, phosphorylation of Tyr-762, Tyr-807 and Tyr-822 are involved in binding to SYK, GRB2 and SYK, respectively. Phosphorylation of Tyr-842 is involved in binding to SYK, PLCG2 and PIK3R1/PIK3R2. Phosphorylated on tyrosine residues by LYN.

It is found in the cell membrane. In terms of biological role, most highly expressed siglec (sialic acid-binding immunoglobulin-like lectin) on B-cells that plays a role in various aspects of B-cell biology including differentiation, antigen presentation, and trafficking to bone marrow. Binds to alpha 2,6-linked sialic acid residues of surface molecules such as CD22 itself, CD45 and IgM in a cis configuration. Can also bind to ligands on other cells as an adhesion molecule in a trans configuration. Acts as an inhibitory coreceptor on the surface of B-cells and inhibits B-cell receptor induced signaling, characterized by inhibition of the calcium mobilization and cellular activation. Mechanistically, the immunoreceptor tyrosine-based inhibitory motif domain is phosphorylated by the Src kinase LYN, which in turn leads to the recruitment of the protein tyrosine phosphatase 1/PTPN6, leading to the negative regulation of BCR signaling. If this negative signaling from is of sufficient strength, apoptosis of the B-cell can be induced. In Gorilla gorilla gorilla (Western lowland gorilla), this protein is B-cell receptor CD22.